The following is an 88-amino-acid chain: Small ribosomal subunit protein uS15c (88 aa).

Belongs to the universal ribosomal protein uS15 family. In terms of assembly, part of the 30S ribosomal subunit.

It is found in the plastid. Its subcellular location is the chloroplast. This Cycas taitungensis (Prince sago) protein is Small ribosomal subunit protein uS15c (rps15).